A 1107-amino-acid polypeptide reads, in one-letter code: RNA2 polyprotein (1107 aa).

Positions 553 to 584 are disordered; the sequence is SRSMRFKSPSDLWSRPSVDGGSTSTQPPSKGS. Over residues 572–581 the composition is skewed to polar residues; that stretch reads GGSTSTQPPS.

The protein belongs to the nepoviruses RNA2 polyprotein family. In terms of processing, specific enzymatic cleavages in vivo by the P1 encoded 3C-like protease yield mature proteins.

It is found in the host cell junction. The protein resides in the host plasmodesma. Its subcellular location is the host cytoplasm. The protein localises to the host nucleus. It localises to the virion. Functionally, implicated in RNA2 replication. Could also be required for nematode transmission of the virus. Transports viral genome to neighboring plant cells directly through plasmosdesmata, without any budding. The movement protein allows efficient cell to cell propagation, by bypassing the host cell wall barrier. Acts by forming a tubular structure at the host plasmodesmata, enlarging it enough to allow free passage of virion capsids. This chain is RNA2 polyprotein, found in Raspberry ringspot virus (strain S) (RpRSV).